We begin with the raw amino-acid sequence, 236 residues long: CQFDGNTISGYKRMIATKDSFQSFNVTEPHISASALEWIDPDSSLRDHINVIVSRDLSFQDLSETPCQIDLSTASIDGAWGSGVGFNLVCTVSLTECSAFLTSIKACDAAMCYGSTTANLVRGQNTIHIVGKGGHSGSKFMCCHDTKCSTTGLVAAAPHLDRVTGYNQADSDKIFDDGAPECGMSCWFKKSGEWILGVLNGNWMVVAVLIALLILSILLFTLCCPRRPSYRKEHKP.

Over 1–202 (CQFDGNTISG…EWILGVLNGN (202 aa)) the chain is Lumenal. An N-linked (GlcNAc...) asparagine; by host glycan is attached at Asn-25. 5 cysteine pairs are disulfide-bonded: Cys-67–Cys-97, Cys-90–Cys-142, Cys-107–Cys-112, Cys-143–Cys-148, and Cys-182–Cys-186. A helical transmembrane segment spans residues 203–223 (WMVVAVLIALLILSILLFTLC). Binding to the ribonucleoprotein stretches follow at residues 219–231 (LFTL…PSYR) and 219–236 (LFTL…EHKP). Topologically, residues 224–236 (CPRRPSYRKEHKP) are cytoplasmic.

Belongs to the hantavirus envelope glycoprotein family. In terms of assembly, homodimer. Homotetramer; forms heterotetrameric Gn-Gc spikes in the pre-fusion conformation. Homotrimer; forms homotrimer in the post-fusion conformation at acidic pH. Interacts (via C-terminus) with the nucleoprotein. Post-translationally, envelope polyprotein precursor is quickly cleaved in vivo just after synthesis, presumably by host signal peptidase.

The protein resides in the virion membrane. Its subcellular location is the host cell surface. The protein localises to the host Golgi apparatus membrane. It is found in the host endoplasmic reticulum membrane. In terms of biological role, forms homotetramers with glycoprotein N at the surface of the virion. Attaches the virion to host cell receptors including integrin ITGAV/ITGB3. This attachment induces virion internalization predominantly through clathrin-dependent endocytosis. Class II fusion protein that promotes fusion of viral membrane with host endosomal membrane after endocytosis of the virion. The sequence is that of Envelope glycoprotein (GP) from Homo sapiens (Human).